The primary structure comprises 336 residues: Holliday junction branch migration complex subunit RuvB (336 aa).

Residues 4-184 (ADRLISAGTT…FGIVQRLEFY (181 aa)) are large ATPase domain (RuvB-L). ATP-binding positions include isoleucine 23, arginine 24, glycine 65, lysine 68, threonine 69, threonine 70, 131 to 133 (EDY), arginine 174, tyrosine 184, and arginine 221. Threonine 69 provides a ligand contact to Mg(2+). The interval 185-255 (QVPDLQYIVS…IAAQALDMLN (71 aa)) is small ATPAse domain (RuvB-S). The tract at residues 258–336 (AEGFDYMDRK…HFGITPPEMP (79 aa)) is head domain (RuvB-H). Positions 294, 313, and 318 each coordinate DNA.

It belongs to the RuvB family. As to quaternary structure, homohexamer. Forms an RuvA(8)-RuvB(12)-Holliday junction (HJ) complex. HJ DNA is sandwiched between 2 RuvA tetramers; dsDNA enters through RuvA and exits via RuvB. An RuvB hexamer assembles on each DNA strand where it exits the tetramer. Each RuvB hexamer is contacted by two RuvA subunits (via domain III) on 2 adjacent RuvB subunits; this complex drives branch migration. In the full resolvosome a probable DNA-RuvA(4)-RuvB(12)-RuvC(2) complex forms which resolves the HJ.

It is found in the cytoplasm. It catalyses the reaction ATP + H2O = ADP + phosphate + H(+). In terms of biological role, the RuvA-RuvB-RuvC complex processes Holliday junction (HJ) DNA during genetic recombination and DNA repair, while the RuvA-RuvB complex plays an important role in the rescue of blocked DNA replication forks via replication fork reversal (RFR). RuvA specifically binds to HJ cruciform DNA, conferring on it an open structure. The RuvB hexamer acts as an ATP-dependent pump, pulling dsDNA into and through the RuvAB complex. RuvB forms 2 homohexamers on either side of HJ DNA bound by 1 or 2 RuvA tetramers; 4 subunits per hexamer contact DNA at a time. Coordinated motions by a converter formed by DNA-disengaged RuvB subunits stimulates ATP hydrolysis and nucleotide exchange. Immobilization of the converter enables RuvB to convert the ATP-contained energy into a lever motion, pulling 2 nucleotides of DNA out of the RuvA tetramer per ATP hydrolyzed, thus driving DNA branch migration. The RuvB motors rotate together with the DNA substrate, which together with the progressing nucleotide cycle form the mechanistic basis for DNA recombination by continuous HJ branch migration. Branch migration allows RuvC to scan DNA until it finds its consensus sequence, where it cleaves and resolves cruciform DNA. This is Holliday junction branch migration complex subunit RuvB from Escherichia coli O17:K52:H18 (strain UMN026 / ExPEC).